Reading from the N-terminus, the 433-residue chain is MRVLLACLLVCALVVSDSDGSNEVHKESGESNCGCLNGGKCVTYKYFSNIQRCSCPKKFQGEHCEIDTSKTCYQGNGHSYRGKANRDLSGRPCLAWDSPTVLLKMYHAHRSDAIQLGLGKHNYCRNPDNQRRPWCYVQIGLKQFVQFCMVQDCSVGKSPSSPREKEEFQCGQKALRPRFKIVGGQVTNAENQPWFAAIYRRHRGGSITYLCGGSLISPCWVVSATHCFIDHPKKENYIVYLGQSRLNSDTRGEMQFEVEKLILHEDYSAESLAHHNDIALLKIRTSRGQCAQPSRSIQTICLPPEHEDAHSRTRCEITGFGKENPSDYRYSDELKMTFVSLVSHEVCQQPHYYGAEVTDKMLCAADPQWETDSCQGDSGGPLVCTIQGRLTLTGIVSWGRDCAMKYKPGVYTRVSKFLPWINTHTRGEINLVL.

Residues 1–20 (MRVLLACLLVCALVVSDSDG) form the signal peptide. Positions 29-65 (GESNCGCLNGGKCVTYKYFSNIQRCSCPKKFQGEHCE) constitute an EGF-like domain. 6 disulfide bridges follow: cysteine 33/cysteine 41, cysteine 35/cysteine 53, cysteine 55/cysteine 64, cysteine 72/cysteine 153, cysteine 93/cysteine 135, and cysteine 124/cysteine 148. Residues 36 to 59 (LNGGKCVTYKYFSNIQRCSCPKKF) form a binds urokinase plasminogen activator surface receptor region. Positions 72-153 (CYQGNGHSYR…FVQFCMVQDC (82 aa)) constitute a Kringle domain. The segment at 154 to 180 (SVGKSPSSPREKEEFQCGQKALRPRFK) is connecting peptide. At serine 160 the chain carries Phosphoserine. Cystine bridges form between cysteine 170–cysteine 301, cysteine 211–cysteine 227, cysteine 219–cysteine 290, cysteine 315–cysteine 384, cysteine 347–cysteine 363, and cysteine 374–cysteine 402. The Peptidase S1 domain occupies 181–426 (IVGGQVTNAE…FLPWINTHTR (246 aa)). Residues histidine 226 and aspartate 277 each act as charge relay system in the active site. The Charge relay system role is filled by serine 378.

The protein belongs to the peptidase S1 family. Found in high and low molecular mass forms. Each consists of two chains, A and B. The high molecular mass form contains a long chain A which is cleaved to yield a short chain A. Forms heterodimer with SERPINA5. Binds LRP1B; binding is followed by internalization and degradation. Interacts with MRC2. Interacts with PLAUR. In complex with SERPINE1, interacts with PLAUR/uPAR. Interacts with SORL1 and LRP1, either alone or in complex with SERPINE1; these interactions are abolished in the presence of LRPAP1/RAP. The ternary complex composed of PLAUR-PLAU-PAI1 also interacts with SORLA. Post-translationally, produced as an inactive single-chain protein (pro-uPA or sc-uPA), is processed into the active disulfide-linked two-chain form of PLAU/uPA by a proteolytic event mediated, at least, by TMPRSS4.

Its subcellular location is the secreted. The enzyme catalyses Specific cleavage of Arg-|-Val bond in plasminogen to form plasmin.. With respect to regulation, inhibited by SERPINA5. Inhibited by SERPINE1. Specifically cleaves the zymogen plasminogen to form the active enzyme plasmin. This is Urokinase-type plasminogen activator (PLAU) from Bos taurus (Bovine).